The chain runs to 484 residues: EF-hand calcium-binding domain-containing protein 14 (484 aa).

Disordered stretches follow at residues 1–48, 227–255, and 313–395; these read MKKR…TDEE, GSMENNGSNQILPSPSPPSELDNKSHSES, and EQRT…FTSD. The span at 37–48 shows a compositional bias: acidic residues; sequence PDSDSESSTDEE. Polar residues-rich tracts occupy residues 228-239, 315-324, and 335-347; these read SMENNGSNQILP, RTNVSSSTME, and LVTNRSDTVQAQS. 2 EF-hand domains span residues 423–452 and 453–484; these read SSIKDLQDLFHKTGQDVDGMLTYQELWNSL and GSAMPRPESLRAFDSNGDGRYSFLELRLALGI. Ca(2+) is bound by residues aspartate 466, asparagine 468, aspartate 470, arginine 472, and glutamate 477.

This is EF-hand calcium-binding domain-containing protein 14 (Efcab14) from Mus musculus (Mouse).